A 79-amino-acid polypeptide reads, in one-letter code: Small ribosomal subunit protein uS17 (79 aa).

The protein belongs to the universal ribosomal protein uS17 family. In terms of assembly, part of the 30S ribosomal subunit.

Its function is as follows. One of the primary rRNA binding proteins, it binds specifically to the 5'-end of 16S ribosomal RNA. The chain is Small ribosomal subunit protein uS17 from Orientia tsutsugamushi (strain Ikeda) (Rickettsia tsutsugamushi).